Consider the following 313-residue polypeptide: Olfactory receptor 4E2 (313 aa).

At 1 to 25 (MDSLNQTRVTEFVFLGLTDNRVLEM) the chain is on the extracellular side. Asparagine 5 carries an N-linked (GlcNAc...) asparagine glycan. The helical transmembrane segment at 26–49 (LFFMAFSAIYMLTLSGNILIIIAT) threads the bilayer. At 50–57 (VFTPSLHT) the chain is on the cytoplasmic side. Residues 58–79 (PMYFFLSNLSFIDICHSSVTVP) form a helical membrane-spanning segment. Topologically, residues 80-100 (KMLEGLLLERKTISFDNCITQ) are extracellular. Cysteine 97 and cysteine 179 are oxidised to a cystine. Residues 101–120 (LFFLHLFACAEIFLLIIVAY) form a helical membrane-spanning segment. Cu cation-binding residues include histidine 105 and cysteine 109. The Cytoplasmic portion of the chain corresponds to 121–139 (DRYVAICTPLHYPNVMNMR). Residues 140–158 (VCIQLVFALWLGGTVHSLG) form a helical membrane-spanning segment. Topologically, residues 159–195 (QTFLTIRLPYCGPNIIDSYFCDVPLVIKLACTDTYLT) are extracellular. The chain crosses the membrane as a helical span at residues 196–219 (GILIVTNSGTISLSCFLAVVTSYM). The Cytoplasmic portion of the chain corresponds to 220–235 (VILVSLRKHSAEGRQK). Residues 236–258 (ALSTCSAHFMVVALFFGPCIFIY) traverse the membrane as a helical segment. Over 259–269 (TRPDTSFSIDK) the chain is Extracellular. Position 260 (arginine 260) interacts with Cu cation. A helical transmembrane segment spans residues 270–289 (VVSVFYTVVTPLLNPFIYTL). The Cytoplasmic portion of the chain corresponds to 290–313 (RNEEVKSAMKQLRQRQVFFTKSYT).

Belongs to the G-protein coupled receptor 1 family.

It localises to the cell membrane. With respect to regulation, copper binding enhances receptor activity in response to odorant binding. Functionally, olfactory receptor that is activated by the binding of organosulfur odorants with thioether groups such as (methylthio)methanethiol (MTMT) and bis(methylthiomethyl) disulfide. Also binds odorants cis-cyclooctene and tert-butyl mercaptan. The activity of this receptor is mediated by G proteins which activate adenylyl cyclase. This chain is Olfactory receptor 4E2, found in Homo sapiens (Human).